Reading from the N-terminus, the 688-residue chain is GTPase IMAP family member 8 (688 aa).

Residues 22-44 (TSIGQGERPRASRGQESNFKQSQ) form a disordered region. Residues 35 to 44 (GQESNFKQSQ) show a composition bias toward polar residues. AIG1-type G domains lie at 46–246 (TSTL…TENS), 281–471 (TPEL…VIRE), and 472–681 (KELL…SAVG). The interval 55–62 (GKQGAGKS) is G1. Residues 55-63 (GKQGAGKSA) and Ser76 contribute to the GTP site. A G2 region spans residues 82 to 86 (MVTKR). The G3 stretch occupies residues 103–106 (DTPD). The segment at 171 to 174 (TRED) is G4. Residues 172 to 174 (RED) and Asn208 contribute to the GTP site. The G5 stretch occupies residues 207 to 209 (NNK).

Belongs to the TRAFAC class TrmE-Era-EngA-EngB-Septin-like GTPase superfamily. AIG1/Toc34/Toc159-like paraseptin GTPase family. IAN subfamily. Spleen, thymus and T-cells. Greatly reduced in T-cells from lymphopenic rats.

It localises to the endoplasmic reticulum. The protein resides in the golgi apparatus. The protein localises to the mitochondrion. Its subcellular location is the cytoplasm. It is found in the cytosol. Its function is as follows. Exerts an anti-apoptotic effect in the immune system and is involved in responses to infections. This chain is GTPase IMAP family member 8 (Gimap8), found in Rattus norvegicus (Rat).